A 183-amino-acid chain; its full sequence is Dual-action ribosomal maturation protein DarP (183 aa).

This sequence belongs to the DarP family.

The protein resides in the cytoplasm. Its function is as follows. Member of a network of 50S ribosomal subunit biogenesis factors which assembles along the 30S-50S interface, preventing incorrect 23S rRNA structures from forming. Promotes peptidyl transferase center (PTC) maturation. This Klebsiella pneumoniae (strain 342) protein is Dual-action ribosomal maturation protein DarP.